The chain runs to 381 residues: Opsin-1 (381 aa).

The Extracellular portion of the chain corresponds to 1–53; it reads MASASLISEPSFSAYWGGSGGFANQTVVDKVPPEMLYLVDPHWYQFPPMNPLW. A glycan (N-linked (GlcNAc...) asparagine) is linked at Asn24. Residues 54 to 78 traverse the membrane as a helical segment; it reads HGLLGFVIGVLGVISVIGNGMVIYI. At 79–90 the chain is on the cytoplasmic side; sequence FSTTKSLRTPSN. The helical transmembrane segment at 91–115 threads the bilayer; that stretch reads LLVVNLAFSDFLMMFTMSAPMGINC. Over 116-130 the chain is Extracellular; sequence YYETWVLGPFMCELY. A disulfide bond links Cys127 and Cys204. Residues 131 to 150 form a helical membrane-spanning segment; it reads ALFGSLFGCGSIWTMTMIAL. Residues 151 to 169 are Cytoplasmic-facing; that stretch reads DRYNVIVKGLSAKPMTNKT. A helical transmembrane segment spans residues 170-193; sequence AMLRILFIWAFSVAWTIMPLFGWN. The Extracellular segment spans residues 194–217; that stretch reads RYVPEGNMTACGTDYLTKDWVSRS. Asn200 carries N-linked (GlcNAc...) asparagine glycosylation. The helical transmembrane segment at 218 to 245 threads the bilayer; the sequence is YILVYSFFVYLLPLGTIIYSYFFILQAV. The Cytoplasmic portion of the chain corresponds to 246–280; it reads SAHEKQMREQRKKMNVASLRSAEASQTSAECKLAK. The helical transmembrane segment at 281–304 threads the bilayer; the sequence is VALMTISLWFFGWTPYLIINFTGI. Residues 305-311 are Extracellular-facing; the sequence is FETMKIS. The chain crosses the membrane as a helical span at residues 312 to 336; sequence PLLTIWGSLFAKANAVFNPIVYGIS. Position 323 is an N6-(retinylidene)lysine (Lys323). The Cytoplasmic segment spans residues 337-381; the sequence is HPKYRAALEKKFPSLACASSSDDNTSVASGATTVSDEKSEKSASA. The span at 354–370 shows a compositional bias: polar residues; sequence ASSSDDNTSVASGATTV. A disordered region spans residues 354–381; sequence ASSSDDNTSVASGATTVSDEKSEKSASA. The segment covering 371 to 381 has biased composition (basic and acidic residues); sequence SDEKSEKSASA.

Belongs to the G-protein coupled receptor 1 family. Opsin subfamily. Phosphorylated on some or all of the serine and threonine residues present in the C-terminal region.

It is found in the cell projection. The protein localises to the rhabdomere membrane. Visual pigments are the light-absorbing molecules that mediate vision. They consist of an apoprotein, opsin, covalently linked to cis-retinal. This chain is Opsin-1 (Lo1), found in Schistocerca gregaria (Desert locust).